The chain runs to 475 residues: DnaB-like replicative helicase (475 aa).

An SF4 helicase domain is found at 165–444 (YMNKARKVPF…STPTEVNEVA (280 aa)). 197–204 (AGVNVGKS) is a binding site for ATP. The tract at residues 456 to 475 (YQRNESTRAQLDALANELKF) is interaction with the helicase assembly factor.

The protein belongs to the helicase family. DnaB subfamily. Homohexamer. The homohexamer is a trimer of asymmetric dimers. Interacts with the DNA primase; this interaction forms the active primosome complex, which is composed of 6 helicase and 1 primase subunits and expresses full helicase and primase activities. Interacts (via C-terminus) with the helicase assembly factor; this interaction brings about the rapid assembly of the helicase onto ssDNA. Part of the replicase complex that includes the DNA polymerase, the polymerase clamp, the clamp loader complex, the single-stranded DNA binding protein, the primase, the DnaB-like replicative helicase and the helicase assembly factor.

ATP-dependent DNA helicase essential for viral DNA replication and recombination. The helicase moves 5' -&gt; 3' on the lagging strand template, unwinding the DNA duplex ahead of the leading strand polymerase at the replication fork and generating ssDNA for both leading and lagging strand synthesis. Interaction with the primase allows the primase to initiate lagging strand synthesis and fully activates the helicase. Loaded by the helicase assembly factor on replication forks that begin at discrete replication origin sequences, as well as on forks that are created during recombination. This Escherichia coli (Bacteriophage T4) protein is DnaB-like replicative helicase.